Here is a 429-residue protein sequence, read N- to C-terminus: Enolase (429 aa).

Residue Gln167 participates in (2R)-2-phosphoglycerate binding. Glu209 acts as the Proton donor in catalysis. The Mg(2+) site is built by Asp246, Glu289, and Asp316. (2R)-2-phosphoglycerate contacts are provided by Lys341, Arg370, Ser371, and Lys392. The active-site Proton acceptor is the Lys341.

It belongs to the enolase family. Component of the RNA degradosome, a multiprotein complex involved in RNA processing and mRNA degradation. Requires Mg(2+) as cofactor.

It localises to the cytoplasm. The protein localises to the secreted. It is found in the cell surface. The catalysed reaction is (2R)-2-phosphoglycerate = phosphoenolpyruvate + H2O. It functions in the pathway carbohydrate degradation; glycolysis; pyruvate from D-glyceraldehyde 3-phosphate: step 4/5. Catalyzes the reversible conversion of 2-phosphoglycerate (2-PG) into phosphoenolpyruvate (PEP). It is essential for the degradation of carbohydrates via glycolysis. This Pseudomonas entomophila (strain L48) protein is Enolase.